The chain runs to 154 residues: 3-hydroxyacyl-[acyl-carrier-protein] dehydratase FabZ (154 aa).

Residue His-54 is part of the active site.

The protein belongs to the thioester dehydratase family. FabZ subfamily.

The protein localises to the cytoplasm. It catalyses the reaction a (3R)-hydroxyacyl-[ACP] = a (2E)-enoyl-[ACP] + H2O. Functionally, involved in unsaturated fatty acids biosynthesis. Catalyzes the dehydration of short chain beta-hydroxyacyl-ACPs and long chain saturated and unsaturated beta-hydroxyacyl-ACPs. The chain is 3-hydroxyacyl-[acyl-carrier-protein] dehydratase FabZ from Shewanella putrefaciens (strain CN-32 / ATCC BAA-453).